Here is a 180-residue protein sequence, read N- to C-terminus: FMN reductase (NADH) RutF (180 aa).

This sequence belongs to the non-flavoprotein flavin reductase family. RutF subfamily.

The enzyme catalyses FMNH2 + NAD(+) = FMN + NADH + 2 H(+). Catalyzes the reduction of FMN to FMNH2 which is used to reduce pyrimidine by RutA via the Rut pathway. The sequence is that of FMN reductase (NADH) RutF from Bradyrhizobium diazoefficiens (strain JCM 10833 / BCRC 13528 / IAM 13628 / NBRC 14792 / USDA 110).